We begin with the raw amino-acid sequence, 483 residues long: Serine/threonine-protein kinase BSK4 (483 aa).

Residue G2 is the site of N-myristoyl glycine attachment. Residues 56-322 enclose the Protein kinase domain; it reads ENVVSEHGET…DTEVLSHVLM (267 aa). ATP-binding positions include 62 to 70 and K84; that span reads HGETAPNVV. Residue D178 is the Proton acceptor of the active site.

This sequence belongs to the protein kinase superfamily. Ser/Thr protein kinase family.

The protein localises to the cell membrane. The enzyme catalyses L-seryl-[protein] + ATP = O-phospho-L-seryl-[protein] + ADP + H(+). It carries out the reaction L-threonyl-[protein] + ATP = O-phospho-L-threonyl-[protein] + ADP + H(+). In terms of biological role, probable serine/threonine kinase that acts as a positive regulator of brassinosteroid (BR) signaling downstream of the receptor kinase BRI1. Functions redundantly with BSK3, BSK6, BSK7 and BSK8. In Arabidopsis thaliana (Mouse-ear cress), this protein is Serine/threonine-protein kinase BSK4.